We begin with the raw amino-acid sequence, 436 residues long: Serine--tRNA ligase (436 aa).

241 to 243 is an L-serine binding site; the sequence is TSE. 272–274 provides a ligand contact to ATP; that stretch reads RAE. Glu295 contributes to the L-serine binding site. Residue 359–362 participates in ATP binding; sequence EISS. Ser395 is an L-serine binding site.

This sequence belongs to the class-II aminoacyl-tRNA synthetase family. Type-1 seryl-tRNA synthetase subfamily. In terms of assembly, homodimer. The tRNA molecule binds across the dimer.

The protein localises to the cytoplasm. The catalysed reaction is tRNA(Ser) + L-serine + ATP = L-seryl-tRNA(Ser) + AMP + diphosphate + H(+). It catalyses the reaction tRNA(Sec) + L-serine + ATP = L-seryl-tRNA(Sec) + AMP + diphosphate + H(+). Its pathway is aminoacyl-tRNA biosynthesis; selenocysteinyl-tRNA(Sec) biosynthesis; L-seryl-tRNA(Sec) from L-serine and tRNA(Sec): step 1/1. Its function is as follows. Catalyzes the attachment of serine to tRNA(Ser). Is also able to aminoacylate tRNA(Sec) with serine, to form the misacylated tRNA L-seryl-tRNA(Sec), which will be further converted into selenocysteinyl-tRNA(Sec). The sequence is that of Serine--tRNA ligase from Beijerinckia indica subsp. indica (strain ATCC 9039 / DSM 1715 / NCIMB 8712).